Reading from the N-terminus, the 477-residue chain is Myosin-binding protein H (477 aa).

The tract at residues 1 to 73 (MMEKNTSEGP…APPSEDVPSA (73 aa)) is disordered. Phosphothreonine occurs at positions 6 and 26. A Fibronectin type-III 1 domain is found at 73 to 168 (APLLLTLDDV…LDQPIHIREN (96 aa)). An Ig-like C2-type 1 domain is found at 172 to 260 (PKIRVPRHLR…EDLEAKAVID (89 aa)). Residues 269 to 364 (PPSSIRLLDV…TKELAHIQKA (96 aa)) enclose the Fibronectin type-III 2 domain. The 85-residue stretch at 382–466 (PSFTQPLADH…INVLGEASVD (85 aa)) folds into the Ig-like C2-type 2 domain.

The protein belongs to the immunoglobulin superfamily. MyBP family. Mainly expressed in the skeletal muscle. Slightly expressed in the left atrium and arteria mammaria interna.

Functionally, binds to myosin; probably involved in interaction with thick myofilaments in the A-band. In Homo sapiens (Human), this protein is Myosin-binding protein H (MYBPH).